The chain runs to 20 residues: Brevinin-1ITb (20 aa).

Position 8 is a methionine sulfoxide; partial (methionine 8). An intrachain disulfide couples cysteine 14 to cysteine 20.

It belongs to the frog skin active peptide (FSAP) family. Brevinin subfamily. In terms of tissue distribution, expressed by the skin glands.

It localises to the secreted. Functionally, antimicrobial peptide. The sequence is that of Brevinin-1ITb from Rana italica (Italian stream frog).